A 122-amino-acid chain; its full sequence is Large ribosomal subunit protein uL14 (122 aa).

The protein belongs to the universal ribosomal protein uL14 family. Part of the 50S ribosomal subunit. Forms a cluster with proteins L3 and L19. In the 70S ribosome, L14 and L19 interact and together make contacts with the 16S rRNA in bridges B5 and B8.

Its function is as follows. Binds to 23S rRNA. Forms part of two intersubunit bridges in the 70S ribosome. The sequence is that of Large ribosomal subunit protein uL14 from Petrotoga mobilis (strain DSM 10674 / SJ95).